The following is a 208-amino-acid chain: Translation initiation factor 2 subunit beta (208 aa).

The TRAM domain occupies 145–203; the sequence is VIEEGETYELRIESVGSKGDGIAKVDKYLIFVPNTSKGEIVKAKVKKISGTLAFAEIVE.

The protein belongs to the eIF-2-beta/eIF-5 family. In terms of assembly, heterotrimer composed of an alpha, a beta and a gamma chain.

EIF-2 functions in the early steps of protein synthesis by forming a ternary complex with GTP and initiator tRNA. This is Translation initiation factor 2 subunit beta from Methanothrix thermoacetophila (strain DSM 6194 / JCM 14653 / NBRC 101360 / PT) (Methanosaeta thermophila).